The following is a 334-amino-acid chain: Trans-1,2-dihydrobenzene-1,2-diol dehydrogenase (334 aa).

Belongs to the Gfo/Idh/MocA family. Homodimer. In terms of tissue distribution, kidney.

It carries out the reaction (1R,2R)-1,2-dihydrobenzene-1,2-diol + NADP(+) = catechol + NADPH + H(+). The catalysed reaction is D-xylose + NADP(+) = D-xylono-1,5-lactone + NADPH + H(+). The sequence is that of Trans-1,2-dihydrobenzene-1,2-diol dehydrogenase (DHDH) from Macaca fascicularis (Crab-eating macaque).